Here is a 169-residue protein sequence, read N- to C-terminus: Lutropin/choriogonadotropin subunit beta (169 aa).

A signal peptide spans 1-20 (MEMLQGLLLWMLLSVGGVWA). 6 disulfides stabilise this stretch: Cys29–Cys77, Cys43–Cys92, Cys46–Cys130, Cys54–Cys108, Cys58–Cys110, and Cys113–Cys120. The N-linked (GlcNAc...) asparagine glycan is linked to Asn33. The interval 131-169 (APQASSSSKDPPSQPLTSTSTPTPGASNRSSHPLPIKTS) is disordered. The segment covering 145–154 (PLTSTSTPTP) has biased composition (low complexity). Residues 155–169 (GASNRSSHPLPIKTS) are compositionally biased toward polar residues. N-linked (GlcNAc...) asparagine glycosylation is present at Asn158.

Belongs to the glycoprotein hormones subunit beta family. Heterodimer of a common alpha chain and a unique beta chain which confers biological specificity to thyrotropin, lutropin, follitropin and gonadotropin.

The protein resides in the secreted. Promotes spermatogenesis and ovulation by stimulating the testes and ovaries to synthesize steroids. The sequence is that of Lutropin/choriogonadotropin subunit beta (LHB) from Equus quagga burchellii (Burchell's zebra).